We begin with the raw amino-acid sequence, 757 residues long: RNA-directed RNA polymerase catalytic subunit (757 aa).

The segment at 52–82 (RGKWTTNTETGAPQLNPIDGPLPEDNEPSGY) is disordered. The span at 55 to 64 (WTTNTETGAP) shows a compositional bias: polar residues. 2 consecutive short sequence motifs (nuclear localization signal) follow at residues 187–195 (RKRRVRDNM) and 203–216 (RTIG…NKRS). Positions 249–256 (RGFVYFVE) are promoter-binding site. The RdRp catalytic domain maps to 286–483 (VRKMMTNSQD…GINMSKKKSY (198 aa)).

The protein belongs to the influenza viruses polymerase PB1 family. In terms of assembly, influenza RNA polymerase is composed of three subunits: PB1, PB2 and PA. Interacts (via N-terminus) with PA (via C-terminus). Interacts (via C-terminus) with PB2 (via N-terminus); this interaction is essential for transcription initiation. Post-translationally, phosphorylated by host PRKCA.

It is found in the host nucleus. The protein localises to the host cytoplasm. It catalyses the reaction RNA(n) + a ribonucleoside 5'-triphosphate = RNA(n+1) + diphosphate. Its function is as follows. RNA-dependent RNA polymerase which is responsible for replication and transcription of virus RNA segments. The transcription of viral mRNAs occurs by a unique mechanism called cap-snatching. 5' methylated caps of cellular mRNAs are cleaved after 10-13 nucleotides by PA. In turn, these short capped RNAs are used as primers by PB1 for transcription of viral mRNAs. During virus replication, PB1 initiates RNA synthesis and copy vRNA into complementary RNA (cRNA) which in turn serves as a template for the production of more vRNAs. This chain is RNA-directed RNA polymerase catalytic subunit, found in Influenza A virus (strain A/Kitakyushu/159/1993 H3N2).